The primary structure comprises 287 residues: Bifunctional protein FolD (287 aa).

NADP(+) is bound by residues 160–162 (GRS), Ser-189, and Thr-230.

This sequence belongs to the tetrahydrofolate dehydrogenase/cyclohydrolase family. Homodimer.

The catalysed reaction is (6R)-5,10-methylene-5,6,7,8-tetrahydrofolate + NADP(+) = (6R)-5,10-methenyltetrahydrofolate + NADPH. It carries out the reaction (6R)-5,10-methenyltetrahydrofolate + H2O = (6R)-10-formyltetrahydrofolate + H(+). It participates in one-carbon metabolism; tetrahydrofolate interconversion. Its function is as follows. Catalyzes the oxidation of 5,10-methylenetetrahydrofolate to 5,10-methenyltetrahydrofolate and then the hydrolysis of 5,10-methenyltetrahydrofolate to 10-formyltetrahydrofolate. The sequence is that of Bifunctional protein FolD from Chlamydia abortus (strain DSM 27085 / S26/3) (Chlamydophila abortus).